Consider the following 1057-residue polypeptide: Carbamoyl phosphate synthase large chain (1057 aa).

A carboxyphosphate synthetic domain region spans residues 1-401 (MPKRDDIQTI…SLLKAIRSLE (401 aa)). The ATP site is built by arginine 129, arginine 169, glycine 175, glycine 176, lysine 208, isoleucine 210, glutamate 215, glycine 241, isoleucine 242, histidine 243, glutamine 284, and glutamate 298. An ATP-grasp 1 domain is found at 133–327 (RSLMNDLNVP…IAKLAAKIAV (195 aa)). Mg(2+) contacts are provided by glutamine 284, glutamate 298, and asparagine 300. Mn(2+) contacts are provided by glutamine 284, glutamate 298, and asparagine 300. The tract at residues 402–546 (YGVHHLGLPN…YGTYETENES (145 aa)) is oligomerization domain. The carbamoyl phosphate synthetic domain stretch occupies residues 547–929 (IVTDKEKILV…ALYKGLTGSG (383 aa)). The 191-residue stretch at 671–861 (EALLHTIDVP…MAQLAMQAIM (191 aa)) folds into the ATP-grasp 2 domain. Residues arginine 707, arginine 746, leucine 748, glutamate 752, glycine 777, valine 778, histidine 779, serine 780, glutamine 820, and glutamate 832 each contribute to the ATP site. Positions 820, 832, and 834 each coordinate Mg(2+). Mn(2+) is bound by residues glutamine 820, glutamate 832, and asparagine 834. Positions 930 to 1057 (VEVKDHGTVL…ESMTFSMRTM (128 aa)) constitute an MGS-like domain. The interval 930 to 1057 (VEVKDHGTVL…ESMTFSMRTM (128 aa)) is allosteric domain.

It belongs to the CarB family. Composed of two chains; the small (or glutamine) chain promotes the hydrolysis of glutamine to ammonia, which is used by the large (or ammonia) chain to synthesize carbamoyl phosphate. Tetramer of heterodimers (alpha,beta)4. The cofactor is Mg(2+). Mn(2+) is required as a cofactor.

It catalyses the reaction hydrogencarbonate + L-glutamine + 2 ATP + H2O = carbamoyl phosphate + L-glutamate + 2 ADP + phosphate + 2 H(+). It carries out the reaction hydrogencarbonate + NH4(+) + 2 ATP = carbamoyl phosphate + 2 ADP + phosphate + 2 H(+). It participates in amino-acid biosynthesis; L-arginine biosynthesis; carbamoyl phosphate from bicarbonate: step 1/1. It functions in the pathway pyrimidine metabolism; UMP biosynthesis via de novo pathway; (S)-dihydroorotate from bicarbonate: step 1/3. In terms of biological role, large subunit of the glutamine-dependent carbamoyl phosphate synthetase (CPSase). CPSase catalyzes the formation of carbamoyl phosphate from the ammonia moiety of glutamine, carbonate, and phosphate donated by ATP, constituting the first step of 2 biosynthetic pathways, one leading to arginine and/or urea and the other to pyrimidine nucleotides. The large subunit (synthetase) binds the substrates ammonia (free or transferred from glutamine from the small subunit), hydrogencarbonate and ATP and carries out an ATP-coupled ligase reaction, activating hydrogencarbonate by forming carboxy phosphate which reacts with ammonia to form carbamoyl phosphate. This Staphylococcus haemolyticus (strain JCSC1435) protein is Carbamoyl phosphate synthase large chain.